The primary structure comprises 225 residues: MVKVKFLGHAAFYIEGSKKILIDPFLTGNPQAAARPEDFKDVDLILVTHAHGDHLGDAGEIARISGAKIVAMYDLANYISEKYKDVETIGMNYGPTEIDGVFIVQVPAWHSSSDGKYSIGNPSGYIVKLDDVTIYHAGDTYVFKDMELFAELYGPIDVALLPIGGHFTMGVREAAKAVELLKPRKVVPMHYNTWPPISADPEEFKRLVGDKAEVVILKPGEELKL.

It belongs to the UPF0173 family.

In Pyrococcus horikoshii (strain ATCC 700860 / DSM 12428 / JCM 9974 / NBRC 100139 / OT-3), this protein is UPF0173 metal-dependent hydrolase PH1671.